We begin with the raw amino-acid sequence, 243 residues long: Uridylate kinase (243 aa).

Position 12–15 (12–15 (KLSG)) interacts with ATP. Gly-54 is a binding site for UMP. 2 residues coordinate ATP: Gly-55 and Arg-59. 135–142 (TGNPYFTT) is a UMP binding site. Residues Asn-163, Tyr-169, and Asp-172 each contribute to the ATP site.

This sequence belongs to the UMP kinase family. Homohexamer.

Its subcellular location is the cytoplasm. The enzyme catalyses UMP + ATP = UDP + ADP. It functions in the pathway pyrimidine metabolism; CTP biosynthesis via de novo pathway; UDP from UMP (UMPK route): step 1/1. Inhibited by UTP. Its function is as follows. Catalyzes the reversible phosphorylation of UMP to UDP. The polypeptide is Uridylate kinase (Roseiflexus sp. (strain RS-1)).